Consider the following 408-residue polypeptide: Snake venom metalloproteinase BaP1 (408 aa).

A signal peptide spans 1 to 20 (MIEVLLVTICLAVFPYQGSS). A propeptide spanning residues 21-191 (IILESGNVND…KASQSNLTPE (171 aa)) is cleaved from the precursor. The residue at position 192 (Q192) is a Pyrrolidone carboxylic acid. Residues 198-394 (RYIELAVVAD…HNPQCILNKP (197 aa)) form the Peptidase M12B domain. Disulfide bonds link C309–C389, C349–C373, and C351–C356. H334 contributes to the Zn(2+) binding site. The active site involves E335. Positions 338 and 344 each coordinate Zn(2+). Positions 395–408 (LLTVSGNELLEAGE) are excised as a propeptide.

This sequence belongs to the venom metalloproteinase (M12B) family. P-I subfamily. As to quaternary structure, monomer. The cofactor is Zn(2+). As to expression, expressed by the venom gland.

It is found in the secreted. With respect to regulation, inhibited by EDTA, partially inhibited by o-phenantropine, and not inhibited by PMSF, pepstatin A, and aprotinin. In terms of biological role, zinc metalloprotease that exhibits a weak hemorrhagic activity (with a minimum hemorrhagic dose of 20 ug by intradermal and intramuscular injection into mice). The basal membrane components collagen (all chains of type IV) (COL4A4), laminin and nidogen are all degraded by this toxin. Rapidly degrades the Aalpha-chain (FGA) of fibrinogen, and later on, degrades the Bbeta-chain (FGB) of fibrinogen. Also activates the complement system, and induces rat neutrophil chemotaxis. Induces edema in mouse food pad and shows a mild myotoxicity. In Bothrops asper (Terciopelo), this protein is Snake venom metalloproteinase BaP1.